Reading from the N-terminus, the 229-residue chain is uncharacterized protein (229 aa).

A run of 7 helical transmembrane segments spans residues 21-41 (IYSL…LMLY), 56-76 (MIYY…SSAA), 83-103 (ALPI…FIIV), 109-129 (TVFQ…IIGV), 141-161 (AMFA…FIGS), 162-182 (GMMS…LIAS), and 202-222 (WAVA…ISLL).

It belongs to the BI1 family.

The protein resides in the cell membrane. This is an uncharacterized protein from Streptococcus pyogenes serotype M1.